Reading from the N-terminus, the 695-residue chain is Elongation factor G 1 (695 aa).

The tr-type G domain occupies 6 to 281 (TRYRNIGIFA…AVVDYLPNPK (276 aa)). GTP-binding positions include 15–22 (AHVDAGKT), 79–83 (DTPGH), and 133–136 (NKLD).

It belongs to the TRAFAC class translation factor GTPase superfamily. Classic translation factor GTPase family. EF-G/EF-2 subfamily.

Its subcellular location is the cytoplasm. In terms of biological role, catalyzes the GTP-dependent ribosomal translocation step during translation elongation. During this step, the ribosome changes from the pre-translocational (PRE) to the post-translocational (POST) state as the newly formed A-site-bound peptidyl-tRNA and P-site-bound deacylated tRNA move to the P and E sites, respectively. Catalyzes the coordinated movement of the two tRNA molecules, the mRNA and conformational changes in the ribosome. The protein is Elongation factor G 1 (fusA) of Synechocystis sp. (strain ATCC 27184 / PCC 6803 / Kazusa).